Here is a 194-residue protein sequence, read N- to C-terminus: Phosphoheptose isomerase (194 aa).

The SIS domain occupies 34 to 188 (LANIFTKGKK…IEGVERIMFP (155 aa)). 49-51 (NGG) lines the substrate pocket. Positions 58 and 62 each coordinate Zn(2+). Substrate-binding positions include E62, 90-91 (ND), 116-118 (STS), S121, and Q168. Residues Q168 and H176 each coordinate Zn(2+).

Belongs to the SIS family. GmhA subfamily. Zn(2+) serves as cofactor.

Its subcellular location is the cytoplasm. It catalyses the reaction 2 D-sedoheptulose 7-phosphate = D-glycero-alpha-D-manno-heptose 7-phosphate + D-glycero-beta-D-manno-heptose 7-phosphate. It participates in carbohydrate biosynthesis; D-glycero-D-manno-heptose 7-phosphate biosynthesis; D-glycero-alpha-D-manno-heptose 7-phosphate and D-glycero-beta-D-manno-heptose 7-phosphate from sedoheptulose 7-phosphate: step 1/1. Its function is as follows. Catalyzes the isomerization of sedoheptulose 7-phosphate in D-glycero-D-manno-heptose 7-phosphate. The sequence is that of Phosphoheptose isomerase from Fusobacterium nucleatum subsp. nucleatum (strain ATCC 25586 / DSM 15643 / BCRC 10681 / CIP 101130 / JCM 8532 / KCTC 2640 / LMG 13131 / VPI 4355).